The primary structure comprises 810 residues: Protein 4.1 (810 aa).

The tract at residues 1-124 is disordered; the sequence is MTTEKSLVAE…KEIEFGTSLD (124 aa). Phosphoserine is present on serine 14. At threonine 61 the chain carries Phosphothreonine. Basic and acidic residues predominate over residues 62–76; sequence PTHEDLTKNKERTSE. 10 positions are modified to phosphoserine: serine 85, serine 86, serine 96, serine 105, serine 122, serine 150, serine 152, serine 153, serine 189, and serine 192. Residues 102–118 show a composition bias toward basic and acidic residues; the sequence is DVESAKEKCEGGQKEIE. The disordered stretch occupies residues 152–203; the sequence is SSAETQPAQEEHREDPDFETKEGGGLEECSKIEVKEESPESKAERELKASQK. A compositionally biased stretch (basic and acidic residues) spans 160–200; sequence QEEHREDPDFETKEGGGLEECSKIEVKEESPESKAERELKA. One can recognise an FERM domain in the interval 211-492; sequence MHCKVSLLDD…EHHTFFRLTS (282 aa). Tyrosine 223 carries the post-translational modification Phosphotyrosine. Residue threonine 379 is modified to Phosphothreonine. Residues 518-613 form a disordered region; sequence TRQASALIDR…DQAEPEPTEV (96 aa). 4 positions are modified to phosphoserine: serine 522, serine 541, serine 543, and serine 555. A compositionally biased stretch (basic and acidic residues) spans 587 to 601; the sequence is AQKETVKDEEKKEEG. The interval 615–659 is spectrin--actin-binding; it reads KDLDKSQEEIKKHHASISELKKNFMESVPEPRPSEWDKRLSTHSP. Phosphoserine occurs at positions 620, 630, 655, and 658. Residues 660–810 are C-terminal (CTD); it reads FRTLNINGQL…VHQETEISEE (151 aa). Phosphothreonine is present on residues threonine 682 and threonine 805.

In terms of assembly, binds with a high affinity to glycophorin and with lower affinity to band III protein. Associates with the nuclear mitotic apparatus. Binds calmodulin, CPAP and DLG1. Also found to associate with contractile apparatus and tight junctions. Interacts with NUMA1; this interaction is negatively regulated by CDK1 during metaphase and promotes for anaphase-specific localization of NUMA1 in symmetrically dividing cells. Interacts with ATP2B1; regulates small intestinal calcium absorption through regulation of membrane expression of ATP2B1. In terms of processing, O-glycosylated; contains N-acetylglucosamine side chains in the C-terminal domain. Post-translationally, phosphorylated at multiple sites by different protein kinases and each phosphorylation event selectively modulates the protein's functions.

Its subcellular location is the nucleus. It is found in the cytoplasm. It localises to the cytoskeleton. The protein resides in the cell cortex. Functionally, protein 4.1 is a major structural element of the erythrocyte membrane skeleton. It plays a key role in regulating membrane physical properties of mechanical stability and deformability by stabilizing spectrin-actin interaction. Recruits DLG1 to membranes. Required for dynein-dynactin complex and NUMA1 recruitment at the mitotic cell cortex during anaphase. The polypeptide is Protein 4.1 (Canis lupus familiaris (Dog)).